Consider the following 823-residue polypeptide: Ankyrin repeat domain-containing protein 20B (823 aa).

6 ANK repeats span residues 32–65 (SELQ…ARDK), 66–95 (QHRT…QIDI), 99–128 (ENRT…NPNL), 132–161 (YGNT…HIEA), 165–194 (DSNT…STHA), and 198–227 (LRRS…DVFA). Disordered regions lie at residues 302–343 (PEKV…GVED) and 355–401 (VQTL…QLSE). The span at 372-382 (QERHERSEKKQ) shows a compositional bias: basic and acidic residues. 3 coiled-coil regions span residues 431-480 (KKLK…KQLE), 565-724 (EMIT…NNST), and 776-805 (LVLE…EKAE).

The protein is Ankyrin repeat domain-containing protein 20B (ANKRD20A8P) of Homo sapiens (Human).